Consider the following 299-residue polypeptide: Ribosomal RNA small subunit methyltransferase H (299 aa).

S-adenosyl-L-methionine-binding positions include 36–38 (GGH), Asp-55, Phe-82, Asp-97, and Gln-104.

Belongs to the methyltransferase superfamily. RsmH family.

It localises to the cytoplasm. It catalyses the reaction cytidine(1402) in 16S rRNA + S-adenosyl-L-methionine = N(4)-methylcytidine(1402) in 16S rRNA + S-adenosyl-L-homocysteine + H(+). Functionally, specifically methylates the N4 position of cytidine in position 1402 (C1402) of 16S rRNA. The chain is Ribosomal RNA small subunit methyltransferase H from Synechococcus sp. (strain RCC307).